The primary structure comprises 300 residues: Free fatty acid receptor 1 (300 aa).

Over 1–8 (MDLPPQLS) the chain is Extracellular. The helical transmembrane segment at 9–31 (FALYVAAFALGFPLNVLAIRGAR) threads the bilayer. Over 32 to 41 (AHARRRLTPS) the chain is Cytoplasmic. Residues 42–64 (LVYALNLGCSDLLLTVSLPLKAV) form a helical membrane-spanning segment. The Extracellular segment spans residues 65 to 79 (EALASGAWPLPASLC). Cys-79 and Cys-170 are disulfide-bonded. Residues 80–101 (PVFGVAHFAPLYAGGGFLAALS) traverse the membrane as a helical segment. Over 102 to 121 (AGRYLGAAFPLGYQAFRRPC) the chain is Cytoplasmic. The helical transmembrane segment at 122–142 (YSWGVCAAIWALVLCHLGLVF) threads the bilayer. Over 143–178 (VLEAPGGWLDHSNTSLGINTPVNGSPVCLEAWDPAS) the chain is Extracellular. Residue Asn-155 is glycosylated (N-linked (GlcNAc...) asparagine). Residues 179-200 (AGPARFSLSLLLFFLPLAITAF) form a helical membrane-spanning segment. Topologically, residues 201 to 223 (CYVGCLRALAHSGLTHRRKLRAA) are cytoplasmic. The helical transmembrane segment at 224-248 (WVAGGALLTLLLCVGPYNASNVASF) threads the bilayer. Residues 249 to 256 (LNPNLGGS) lie on the Extracellular side of the membrane. Residues 257–279 (WRKLGLITGAWSVVLNPLVTGYL) form a helical membrane-spanning segment. Residues 280–300 (GRGPGLKTVCAARTQGSTSQK) lie on the Cytoplasmic side of the membrane.

This sequence belongs to the G-protein coupled receptor 1 family.

Its subcellular location is the cell membrane. In terms of biological role, G-protein coupled receptor for medium and long chain saturated and unsaturated fatty acids that plays an important role in glucose homeostasis. Fatty acid binding increases glucose-stimulated insulin secretion, and may also enhance the secretion of glucagon-like peptide 1 (GLP-1). May also play a role in bone homeostasis; receptor signaling activates pathways that inhibit osteoclast differentiation. Ligand binding leads to a conformation change that triggers signaling via G-proteins that activate phospholipase C, leading to an increase of the intracellular calcium concentration. Seems to act through a G(q) and G(i)-mediated pathway. Mediates the anti-inflammatory effects of omega-3 polyunsaturated fatty acids (PUFAs) via inhibition of NLRP3 inflammasome activation. This chain is Free fatty acid receptor 1 (FFAR1), found in Macaca fascicularis (Crab-eating macaque).